Consider the following 477-residue polypeptide: ATP synthase subunit beta (477 aa).

ATP is bound at residue 151–158 (GGAGVGKT).

It belongs to the ATPase alpha/beta chains family. As to quaternary structure, F-type ATPases have 2 components, CF(1) - the catalytic core - and CF(0) - the membrane proton channel. CF(1) has five subunits: alpha(3), beta(3), gamma(1), delta(1), epsilon(1). CF(0) has three main subunits: a(1), b(2) and c(9-12). The alpha and beta chains form an alternating ring which encloses part of the gamma chain. CF(1) is attached to CF(0) by a central stalk formed by the gamma and epsilon chains, while a peripheral stalk is formed by the delta and b chains.

The protein resides in the cell inner membrane. It catalyses the reaction ATP + H2O + 4 H(+)(in) = ADP + phosphate + 5 H(+)(out). Produces ATP from ADP in the presence of a proton gradient across the membrane. The catalytic sites are hosted primarily by the beta subunits. The polypeptide is ATP synthase subunit beta (Bradyrhizobium diazoefficiens (strain JCM 10833 / BCRC 13528 / IAM 13628 / NBRC 14792 / USDA 110)).